The sequence spans 798 residues: Phenylalanine--tRNA ligase beta subunit (798 aa).

The tRNA-binding domain occupies 39–147 (AARLAGFTLA…PSGEVGERFI (109 aa)). A B5 domain is found at 404–475 (DHSRAYKLDA…RIASLTKLVG (72 aa)). The Mg(2+) site is built by Asp-453, Asp-459, Glu-462, and Glu-463. The FDX-ACB domain occupies 704-797 (RDLQAVERDF…VAKATGGTLR (94 aa)).

This sequence belongs to the phenylalanyl-tRNA synthetase beta subunit family. Type 1 subfamily. In terms of assembly, tetramer of two alpha and two beta subunits. Requires Mg(2+) as cofactor.

It is found in the cytoplasm. It carries out the reaction tRNA(Phe) + L-phenylalanine + ATP = L-phenylalanyl-tRNA(Phe) + AMP + diphosphate + H(+). The chain is Phenylalanine--tRNA ligase beta subunit from Ruegeria pomeroyi (strain ATCC 700808 / DSM 15171 / DSS-3) (Silicibacter pomeroyi).